The sequence spans 341 residues: Geranylgeranyl pyrophosphate synthase penG (341 aa).

The isopentenyl diphosphate site is built by lysine 68, arginine 71, and histidine 100. Positions 107 and 111 each coordinate Mg(2+). Position 116 (arginine 116) interacts with dimethylallyl diphosphate. An isopentenyl diphosphate-binding site is contributed by arginine 117. Residues lysine 194, threonine 195, and glutamine 228 each coordinate dimethylallyl diphosphate. Aspartate 231 contributes to the Mg(2+) binding site. Asparagine 235, lysine 245, and lysine 255 together coordinate dimethylallyl diphosphate.

Belongs to the FPP/GGPP synthase family. Requires Mg(2+) as cofactor.

The catalysed reaction is isopentenyl diphosphate + dimethylallyl diphosphate = (2E)-geranyl diphosphate + diphosphate. The enzyme catalyses isopentenyl diphosphate + (2E)-geranyl diphosphate = (2E,6E)-farnesyl diphosphate + diphosphate. It carries out the reaction isopentenyl diphosphate + (2E,6E)-farnesyl diphosphate = (2E,6E,10E)-geranylgeranyl diphosphate + diphosphate. Its pathway is secondary metabolite biosynthesis. In terms of biological role, geranylgeranyl pyrophosphate synthase; part of the gene cluster that mediates the biosynthesis of the indole diterpenes penitrems. The geranylgeranyl diphosphate (GGPP) synthase penG catalyzes the first step in penitrem biosynthesis via conversion of farnesyl pyrophosphate and isopentyl pyrophosphate into geranylgeranyl pyrophosphate (GGPP). Condensation of indole-3-glycerol phosphate with GGPP by the prenyl transferase penC then forms 3-geranylgeranylindole (3-GGI). Epoxidation by the FAD-dependent monooxygenase penM leads to a epoxidized-GGI that is substrate of the terpene cyclase penB for cyclization to yield paspaline. Paspaline is subsequently converted to 13-desoxypaxilline by the cytochrome P450 monooxygenase penP, the latter being then converted to paxilline by the cytochrome P450 monooxygenase penQ. Paxilline is converted to beta-paxitriol via C-10 ketoreduction by the short-chain dehydrogenase PC-15 which can be monoprenylated at the C-20 by the indole diterpene prenyltransferase penD. A two-step elimination (acetylation and elimination) process performed by the O-acetyltransferase PC-16 and the P.simplicissimum ptmI-ortholog not yet identified in P.crustosum, leads to the production of the prenylated form of penijanthine. The FAD-linked oxidoreductase ptmO then converts the prenylated form of penijanthine into PC-M5 which is in turn transformed into PC-M4 by the aromatic dimethylallyltransferase PC-22. A series of oxidation steps involving 4 cytochrome P450 monooxygenases (PC-21, PC-05, PC-23, PC-20) and a FAD-dependent monooxygenase (PC-14) are required for the transformation of PC-M4 to penitrems A and E. Synthesis of these final products is proposed to proceed via penitrems D and C (PC-21, PC-05, PC-14) and penitrems B and F (PC-21, PC-05, PC-14, PC-23). The sequence is that of Geranylgeranyl pyrophosphate synthase penG from Penicillium crustosum (Blue mold fungus).